A 493-amino-acid chain; its full sequence is Argininosuccinate lyase (493 aa).

This sequence belongs to the lyase 1 family. Argininosuccinate lyase subfamily.

It localises to the cytoplasm. The catalysed reaction is 2-(N(omega)-L-arginino)succinate = fumarate + L-arginine. Its pathway is amino-acid biosynthesis; L-arginine biosynthesis; L-arginine from L-ornithine and carbamoyl phosphate: step 3/3. This is Argininosuccinate lyase from Methanospirillum hungatei JF-1 (strain ATCC 27890 / DSM 864 / NBRC 100397 / JF-1).